Reading from the N-terminus, the 126-residue chain is Large ribosomal subunit protein bL17 (126 aa).

It belongs to the bacterial ribosomal protein bL17 family. As to quaternary structure, part of the 50S ribosomal subunit. Contacts protein L32.

The sequence is that of Large ribosomal subunit protein bL17 from Magnetococcus marinus (strain ATCC BAA-1437 / JCM 17883 / MC-1).